Reading from the N-terminus, the 198-residue chain is Transcription factor FapR (198 aa).

A MaoC-like domain is found at 102 to 168 (TRIARGHHLF…GRTVVDVNSY (67 aa)).

It belongs to the FapR family.

Functionally, transcriptional factor involved in regulation of membrane lipid biosynthesis by repressing genes involved in fatty acid and phospholipid metabolism. The polypeptide is Transcription factor FapR (Geobacillus thermodenitrificans (strain NG80-2)).